We begin with the raw amino-acid sequence, 319 residues long: Cytochrome f (319 aa).

The signal sequence occupies residues 1–35 (MQNRNISYWIKKCVIQSISIVILMKIIAWPSISEA). The heme site is built by Y36, C56, C59, and H60. A helical membrane pass occupies residues 285-305 (VQSLLVFFVSVTLAQIFLVLK).

Belongs to the cytochrome f family. As to quaternary structure, the 4 large subunits of the cytochrome b6-f complex are cytochrome b6, subunit IV (17 kDa polypeptide, petD), cytochrome f and the Rieske protein, while the 4 small subunits are PetG, PetL, PetM and PetN. The complex functions as a dimer. The cofactor is heme.

The protein resides in the plastid. The protein localises to the chloroplast thylakoid membrane. Its function is as follows. Component of the cytochrome b6-f complex, which mediates electron transfer between photosystem II (PSII) and photosystem I (PSI), cyclic electron flow around PSI, and state transitions. The sequence is that of Cytochrome f from Physcomitrium patens (Spreading-leaved earth moss).